We begin with the raw amino-acid sequence, 333 residues long: MKPFPTHPDAIPAELQDVMDRLGSVAIEVANRIARGGIDEDLAGLCGTNTDGDGQKALDVIADDAFRVALEGSAVRFYASEEQDTAVTLNEAGTLALAIDPLDGSSNIDTNLSVGTIFAIWPAAATAEASFLRLGSELIAAGYVIYGPQVCMMVSFGKGTQKYVLDPGSRSFVLVDRAVKVPPSSTEFAINASNYRHWPKPIRAYIDDCVAGTEGPRGRNFNMRWLASLVAETHRILARGGVFLYPRDSRKGYEQGRLRYLYECAPIAFVITQAGGGATDGENPILGQTPSRLHARTPFVFGSAEKVARITAYHDLPEQETSALFGNRGLFRS.

Mg(2+) is bound by residues glutamate 81, aspartate 100, leucine 102, and aspartate 103. Residues 103–106 (DGSS) and asparagine 191 contribute to the substrate site. Residue glutamate 263 coordinates Mg(2+).

This sequence belongs to the FBPase class 1 family. As to quaternary structure, homotetramer. Requires Mg(2+) as cofactor.

The protein resides in the cytoplasm. It catalyses the reaction beta-D-fructose 1,6-bisphosphate + H2O = beta-D-fructose 6-phosphate + phosphate. It participates in carbohydrate biosynthesis; Calvin cycle. This chain is Fructose-1,6-bisphosphatase class 1 1, found in Cereibacter sphaeroides (strain ATCC 17023 / DSM 158 / JCM 6121 / CCUG 31486 / LMG 2827 / NBRC 12203 / NCIMB 8253 / ATH 2.4.1.) (Rhodobacter sphaeroides).